Here is a 562-residue protein sequence, read N- to C-terminus: Arginine--tRNA ligase (562 aa).

Positions 126 to 136 (ANPTGPLNVGH) match the 'HIGH' region motif.

This sequence belongs to the class-I aminoacyl-tRNA synthetase family. Monomer.

It is found in the cytoplasm. The catalysed reaction is tRNA(Arg) + L-arginine + ATP = L-arginyl-tRNA(Arg) + AMP + diphosphate. In Salinibacter ruber (strain DSM 13855 / M31), this protein is Arginine--tRNA ligase.